We begin with the raw amino-acid sequence, 206 residues long: Outer-membrane lipoprotein LolB (206 aa).

The first 18 residues, 1–18 (MKTFKFFTALFATAILTA), serve as a signal peptide directing secretion. A lipid anchor (N-palmitoyl cysteine) is attached at cysteine 19. Residue cysteine 19 is the site of S-diacylglycerol cysteine attachment.

The protein belongs to the LolB family. As to quaternary structure, monomer.

The protein resides in the cell outer membrane. In terms of biological role, plays a critical role in the incorporation of lipoproteins in the outer membrane after they are released by the LolA protein. The sequence is that of Outer-membrane lipoprotein LolB from Haemophilus influenzae (strain PittGG).